A 187-amino-acid polypeptide reads, in one-letter code: Elongation factor P (187 aa).

It belongs to the elongation factor P family.

Its subcellular location is the cytoplasm. It participates in protein biosynthesis; polypeptide chain elongation. Functionally, involved in peptide bond synthesis. Stimulates efficient translation and peptide-bond synthesis on native or reconstituted 70S ribosomes in vitro. Probably functions indirectly by altering the affinity of the ribosome for aminoacyl-tRNA, thus increasing their reactivity as acceptors for peptidyl transferase. This chain is Elongation factor P, found in Parasynechococcus marenigrum (strain WH8102).